A 151-amino-acid polypeptide reads, in one-letter code: MTGLERQLTEMLEAPVGALGYELVGLEFVRAGEHSTLRVFIDHENGIFVEDCAEASRQISAVMDVEDPITVAYNLEVSSPGLERPLFKAAHYQQFVGHEVSLVLKMPMNNRRKWKGDILEVNGEIVTVTVDGNNEEFALSNISKANLVPKF.

Belongs to the RimP family.

Its subcellular location is the cytoplasm. In terms of biological role, required for maturation of 30S ribosomal subunits. This Aliivibrio fischeri (strain MJ11) (Vibrio fischeri) protein is Ribosome maturation factor RimP.